Consider the following 665-residue polypeptide: MRYQWRSLLFRSYRSSPRPFLSHHSRFQVISNSTRSFSSFLHERFGVQQRQCLFALRSPLASSVSRRFSSESAIEEKLPAETVVIDVFSRLNGKDEITKELDSNDVVISHELALRVLRELESSPDVAGRFFKWGLEAYPQKLSSKSYNTMLRIFGVNGLVDEFWRLVDDMKKKGHGVSANVRDRVGDKFKKDGLENDLERLKELFASGSMDNSVDKVCNRVCKIVMKEVWGADVEKQLRDLKLEFKSDVVKMVLEKLDVDPRKALLFFRWIDESGSFKHDEKTYNAMARVLGKEKFLDRFQHMIEEIRSAGYEMEMETYVRVSARFCQTKMIKEAVELFEFAMAGSISNTPTPHCCSLLLKKIVTAKKLDMDLFTRTLKAYTGNGNVVPDVMLQHVLKSLRSVDRFGQSNEVLKAMNEGGYVPSGDLQSVIASGLSRKGKKDEANELVNFMEASGNHLDDKAMASLVEGHCDAKDLEEASECFKKMIGKEGVSYAGYAFEKLVLAYCNSFQARDVYKLFSELVKQNQLKPWHSTYKIMVRNLLMKKVARDGGFEEALSLLPMMRNHGFPPFVDPFMDYLSNSGTSAEAFAFLKAVTSKKFPSNSMVLRVFEAMLKSARHSEAQDLLSMSPSYIRRNAEVLELFNTMKPEKCSLEKPLPAPAQIEA.

Residues 1-37 (MRYQWRSLLFRSYRSSPRPFLSHHSRFQVISNSTRSF) constitute a mitochondrion transit peptide. PPR repeat units lie at residues 280–314 (DEKT…GYEM), 315–349 (EMET…SISN), 352–388 (TPHC…GNVV), 389–423 (PDVM…GYVP), 424–458 (SGDL…GNHL), 459–493 (DDKA…EGVS), 495–530 (AGYA…QLKP), and 536–570 (KIMV…GFPP).

This sequence belongs to the PPR family. P subfamily.

The protein resides in the mitochondrion. The chain is Pentatricopeptide repeat-containing protein At3g02490, mitochondrial from Arabidopsis thaliana (Mouse-ear cress).